The sequence spans 334 residues: MDRTLIQEILEVVEQAAIASAKLTGCGLKNEADAAAVEAMRDRMGKINMRGRIVIGEGERDEAPMLYIGEEVGSGTGPGVDFAVDPCEGTNLCANSQRGSMAVLAASETGGLFNAPDFYMKKLAAPPAAKGKVDINKSATENINILSECLGIAVSDLVIVVMDRARHKDLIAEIRATGARVQPISDGDVQAAIACGFAGTGTHCLMGIGAAPEGVISAAALRALGGHFQGQLVYDPAVAQTKEWEGLTREGNLARLAEMGISDPDKVYEANELASGENVVFAGSGITDGLLFGGVKFESDCVRTSSLVISTLDNSARFTDTVHIKPGAQSIALR.

Residues Asp-33, Glu-57, Asp-85, and Glu-88 each coordinate Mn(2+). Substrate-binding positions include 88–90 (EGT), Tyr-119, 164–166 (RAR), and 186–188 (DGD). Glu-213 is a binding site for Mn(2+).

Belongs to the FBPase class 2 family. In terms of assembly, homotetramer. It depends on Mn(2+) as a cofactor.

The enzyme catalyses beta-D-fructose 1,6-bisphosphate + H2O = beta-D-fructose 6-phosphate + phosphate. It carries out the reaction D-sedoheptulose 1,7-bisphosphate + H2O = D-sedoheptulose 7-phosphate + phosphate. Its pathway is carbohydrate biosynthesis; Calvin cycle. Catalyzes the hydrolysis of fructose 1,6-bisphosphate (Fru 1,6-P2) and sedoheptulose 1,7-bisphosphate (Sed 1,7-P2) to fructose 6-phosphate and sedoheptulose 7-phosphate, respectively. The polypeptide is D-fructose 1,6-bisphosphatase class 2/sedoheptulose 1,7-bisphosphatase (Synechococcus sp. (strain RCC307)).